The following is a 239-amino-acid chain: Cell number regulator 6 (239 aa).

Over residues 1–10 the composition is skewed to polar residues; it reads MAEDATSSHP. Residues 1–33 are disordered; that stretch reads MAEDATSSHPSRYVKLTKDQDAPAEDIRPGELN. Positions 16–29 are enriched in basic and acidic residues; it reads LTKDQDAPAEDIRP. 2 consecutive transmembrane segments (helical) span residues 107-127 and 136-156; these read CVCH…TAIF and FLIG…TGIF.

This sequence belongs to the cornifelin family. As to expression, expressed in roots, leaves, stalks, apical meristems, immature ears, endosperm, pericarp and tassel spikelets.

The protein localises to the membrane. The protein is Cell number regulator 6 (CNR6) of Zea mays (Maize).